Consider the following 31-residue polypeptide: Protamine-Z (31 aa).

The segment at 1–31 (ARRRRSRRASRPVRRRRPRRVSRRRRARRRR) is disordered.

In terms of tissue distribution, testis.

It localises to the nucleus. The protein localises to the chromosome. In terms of biological role, protamines substitute for histones in the chromatin of sperm during the haploid phase of spermatogenesis. They compact sperm DNA into a highly condensed, stable and inactive complex. The chain is Protamine-Z from Clupea harengus (Atlantic herring).